We begin with the raw amino-acid sequence, 293 residues long: Putative ribose uptake protein RbsU (293 aa).

Transmembrane regions (helical) follow at residues Ser-2–Ser-24, Ile-34–Phe-56, Leu-63–Phe-80, Thr-95–Ile-117, Ile-122–Trp-139, Ala-154–Ala-171, Leu-180–Met-202, Ile-212–Ala-234, Leu-241–Leu-263, and Val-273–Ile-292.

The protein belongs to the GRP transporter (TC 2.A.7.5) family.

It localises to the cell membrane. Its function is as follows. Could be involved in the uptake of ribose. This chain is Putative ribose uptake protein RbsU (rbsU), found in Staphylococcus aureus (strain Mu50 / ATCC 700699).